The primary structure comprises 459 residues: Trichothecene 3-O-acetyltransferase TRI101 (459 aa).

Ca(2+)-binding residues include Asp218 and Ile221. Residues Lys253, 266-269 (FVST), Asp302, Gln318, and Arg343 each bind CoA. Asp376 lines the Ca(2+) pocket. CoA is bound by residues Ser386 and Lys390. Position 449 (Glu449) interacts with Ca(2+).

The protein belongs to the trichothecene 3-O-acetyltransferase family.

It functions in the pathway sesquiterpene biosynthesis; trichothecene biosynthesis. Functionally, 3-O-acetyltransferase involved in the biosynthesis of trichothecenes, a very large family of chemically related bicyclic sesquiterpene compounds acting as mycotoxins, including T2-toxin. The biosynthesis of trichothecenes begins with the cyclization of farnesyl diphosphate to trichodiene and is catalyzed by the trichodiene synthase TRI5. Trichodiene undergoes a series of oxygenations catalyzed by the cytochrome P450 monooxygenase TRI4. TRI4 controls the addition of four oxygens at C-2, C-3, C-11, and the C-12, C-13-epoxide to form the intermediate isotrichotriol. Isotrichotriol then undergoes a non-enzymatic isomerization and cyclization to form isotrichodermol. During this process, the oxygen at the C-2 position becomes the pyran ring oxygen and the hydroxyl group at C-11 is lost. More complex type A trichothecenes are built by modifying isotrichodermol through a series of paired hydroxylation and acetylation or acylation steps. Isotrichodermol is converted to isotrichodermin by the acetyltransferase TRI101. TRI101 encodes a C-3 transacetylase that acts as a self-protection or resistance factor during biosynthesis and that the presence of a free C-3 hydroxyl group is a key component of Fusarium trichothecene phytotoxicity. A second hydroxyl group is added to C-15 by the trichothecene C-15 hydroxylase TRI11, producing 15-decalonectrin, which is then acetylated by TRI3, producing calonectrin. A third hydroxyl group is added at C-4 by the cytochrome P450 monooxygenase TRI13, converting calonectrin to 3,15-diacetoxyspirpenol, which is subsequently acetylated bythe acetyltransferase TRI7. A fourth hydroxyl group is added to C-8 by the cytochrome P450 monooxygenase TRI1, followed by the addition of an isovaleryl moiety by TRI16. Finally, the acetyl group is removed from the C-3 position by the trichothecene C-3 esterase TRI8 to produce T-2 toxin. This Fusarium sporotrichioides protein is Trichothecene 3-O-acetyltransferase TRI101.